Consider the following 373-residue polypeptide: Ribonuclease D (373 aa).

The 169-residue stretch at 3 to 171 folds into the 3'-5' exonuclease domain; it reads YQLITTDAGL…MAKRLVQETE (169 aa). The region spanning 210-289 is the HRDC domain; the sequence is RPRQLGCLQK…AEAAELEESA (80 aa).

It belongs to the RNase D family. A divalent metal cation is required as a cofactor.

It localises to the cytoplasm. The catalysed reaction is Exonucleolytic cleavage that removes extra residues from the 3'-terminus of tRNA to produce 5'-mononucleotides.. Functionally, exonuclease involved in the 3' processing of various precursor tRNAs. Initiates hydrolysis at the 3'-terminus of an RNA molecule and releases 5'-mononucleotides. This Serratia proteamaculans (strain 568) protein is Ribonuclease D.